The primary structure comprises 246 residues: MQLKTSIGLITCRMNTQNNQIETILVQKRYSLAFSEFIHCHYSINANQGHLIKMFNNMTINERLLVKTLDFDRMWYHIWIETPVYELYHKKYQKFRKNWLLPDNGKKLISLINQAKGSGTLLWEIPKGKPKEDESDLTCAIREFEEETGITREYYQILPEFKKSMSYFDGKTEYKHIYFLAMLCKSLEEPNMNLSLQYENRIAEISKISWQNMEAVRFISKRQSLNLEPIIGPAFNFIKNYLRYKH.

One can recognise a Nudix hydrolase domain in the interval Gln93–Lys239. The Nudix box motif lies at Gly128–Gly149. A Mg(2+)-binding site is contributed by Glu134. Catalysis depends on Glu143, which acts as the Nucleophile. Mg(2+)-binding residues include Glu147 and Asp169.

The protein belongs to the Nudix hydrolase family. DIPP subfamily. In terms of assembly, interacts with host RPL23A. Requires Mg(2+) as cofactor. Mn(2+) serves as cofactor.

Its subcellular location is the host rough endoplasmic reticulum. It carries out the reaction diphospho-myo-inositol polyphosphate + H2O = myo-inositol polyphosphate + phosphate.. In terms of biological role, decapping enzyme required for the removal of the 5'-end m7GpppN cap tethered to viral and host mRNAs to allow their decay in cells. May therefore accelerate viral and cellular mRNA turnover to eliminate competing host mRNAs and allow stage-specific synthesis of viral proteins. Acceleration of the turnover of cellular transcripts may even promote the shutoff of host protein synthesis. In addition to the mRNA cap, g5R also efficiently hydrolyzes diphosphoinositol polyphosphates. Down-regulation of the level of PP-InsP5 (diphosphoinositol pentakisphosphate) may play a role in viral manipulation of the cellular secretory pathway, a step necessary for the formation of virions. Binds viral and cellular poly(A) mRNAs, thereby decreasing both types of mRNAs. The polypeptide is mRNA-decapping protein g5R (African swine fever virus (isolate Warthog/Namibia/Wart80/1980) (ASFV)).